We begin with the raw amino-acid sequence, 309 residues long: MAGNSRRRGAVRKAGTKKGPTVGSGGQRRRGLEGRGPTPPAHLRPNHPAAKRAQSPPRRPAKRTEETETVLGRNPVLECLRAGVPATALYVALGTEADERLTESVSRAADSGISILEVPRADLDRMTGNHLHQGIALQVPPYIYAHPDDLLEAAAGSPPALLVALDNISDPRNLGAIVRSVAAFGGHGVLIPQRRSASVTAVAWRTSAGAAARIPVARATNLTRTLQDWADRGLRVIGLDAGGDTTLDDLDGSDPLVVVVGSEGKGLSRLVRQNCDEVVSIPMAGSAESLNASVAAGVVLAEISRQRRG.

Residues 1-16 (MAGNSRRRGAVRKAGT) show a composition bias toward basic residues. Positions 1 to 70 (MAGNSRRRGA…AKRTEETETV (70 aa)) are disordered. S-adenosyl-L-methionine contacts are provided by Gly-261, Ile-281, and Leu-290.

It belongs to the class IV-like SAM-binding methyltransferase superfamily. RNA methyltransferase TrmH family.

This is an uncharacterized protein from Mycobacterium avium (strain 104).